The sequence spans 96 residues: Co-chaperonin GroES (96 aa).

It belongs to the GroES chaperonin family. Heptamer of 7 subunits arranged in a ring. Interacts with the chaperonin GroEL.

Its subcellular location is the cytoplasm. In terms of biological role, together with the chaperonin GroEL, plays an essential role in assisting protein folding. The GroEL-GroES system forms a nano-cage that allows encapsulation of the non-native substrate proteins and provides a physical environment optimized to promote and accelerate protein folding. GroES binds to the apical surface of the GroEL ring, thereby capping the opening of the GroEL channel. The protein is Co-chaperonin GroES of Polaromonas sp. (strain JS666 / ATCC BAA-500).